The sequence spans 155 residues: SsrA-binding protein (155 aa).

It belongs to the SmpB family.

The protein resides in the cytoplasm. Functionally, required for rescue of stalled ribosomes mediated by trans-translation. Binds to transfer-messenger RNA (tmRNA), required for stable association of tmRNA with ribosomes. tmRNA and SmpB together mimic tRNA shape, replacing the anticodon stem-loop with SmpB. tmRNA is encoded by the ssrA gene; the 2 termini fold to resemble tRNA(Ala) and it encodes a 'tag peptide', a short internal open reading frame. During trans-translation Ala-aminoacylated tmRNA acts like a tRNA, entering the A-site of stalled ribosomes, displacing the stalled mRNA. The ribosome then switches to translate the ORF on the tmRNA; the nascent peptide is terminated with the 'tag peptide' encoded by the tmRNA and targeted for degradation. The ribosome is freed to recommence translation, which seems to be the essential function of trans-translation. The protein is SsrA-binding protein of Streptococcus equi subsp. zooepidemicus (strain MGCS10565).